The sequence spans 464 residues: ATP-dependent protease ATPase subunit HslU (464 aa).

ATP contacts are provided by residues Ile-19, 61–66 (GVGKTE), Asp-277, Glu-342, and Arg-414.

It belongs to the ClpX chaperone family. HslU subfamily. A double ring-shaped homohexamer of HslV is capped on each side by a ring-shaped HslU homohexamer. The assembly of the HslU/HslV complex is dependent on binding of ATP.

It is found in the cytoplasm. Its function is as follows. ATPase subunit of a proteasome-like degradation complex; this subunit has chaperone activity. The binding of ATP and its subsequent hydrolysis by HslU are essential for unfolding of protein substrates subsequently hydrolyzed by HslV. HslU recognizes the N-terminal part of its protein substrates and unfolds these before they are guided to HslV for hydrolysis. This Lactobacillus gasseri (strain ATCC 33323 / DSM 20243 / BCRC 14619 / CIP 102991 / JCM 1131 / KCTC 3163 / NCIMB 11718 / NCTC 13722 / AM63) protein is ATP-dependent protease ATPase subunit HslU.